Consider the following 285-residue polypeptide: 1,4-dihydroxy-2-naphthoyl-CoA synthase (285 aa).

Substrate is bound by residues Arg45, 84-88 (AGGDQ), Tyr97, 129-133 (YSIGG), Thr155, Ser161, Tyr258, and Lys273. Residue 154–156 (QTG) participates in hydrogencarbonate binding.

Belongs to the enoyl-CoA hydratase/isomerase family. MenB subfamily. As to quaternary structure, homohexamer. Hydrogencarbonate is required as a cofactor.

The catalysed reaction is 2-succinylbenzoyl-CoA + H(+) = 1,4-dihydroxy-2-naphthoyl-CoA + H2O. It participates in quinol/quinone metabolism; 1,4-dihydroxy-2-naphthoate biosynthesis; 1,4-dihydroxy-2-naphthoate from chorismate: step 6/7. It functions in the pathway quinol/quinone metabolism; menaquinone biosynthesis. In terms of biological role, converts o-succinylbenzoyl-CoA (OSB-CoA) to 1,4-dihydroxy-2-naphthoyl-CoA (DHNA-CoA). The chain is 1,4-dihydroxy-2-naphthoyl-CoA synthase from Salmonella typhimurium (strain LT2 / SGSC1412 / ATCC 700720).